We begin with the raw amino-acid sequence, 396 residues long: Tryptophan synthase beta chain 1 (396 aa).

K86 is subject to N6-(pyridoxal phosphate)lysine.

It belongs to the TrpB family. In terms of assembly, tetramer of two alpha and two beta chains. It depends on pyridoxal 5'-phosphate as a cofactor.

It catalyses the reaction (1S,2R)-1-C-(indol-3-yl)glycerol 3-phosphate + L-serine = D-glyceraldehyde 3-phosphate + L-tryptophan + H2O. Its pathway is amino-acid biosynthesis; L-tryptophan biosynthesis; L-tryptophan from chorismate: step 5/5. Its function is as follows. The beta subunit is responsible for the synthesis of L-tryptophan from indole and L-serine. This chain is Tryptophan synthase beta chain 1 (trpB1), found in Vibrio parahaemolyticus serotype O3:K6 (strain RIMD 2210633).